A 256-amino-acid polypeptide reads, in one-letter code: MPAKKRDHYYNKAKQMGYRSRASFKLQFINKKHHIIKKGDTVVDLGAAPGGWLQVAKELNGGGKVIGVDLQRIEPIEGVETIKGDMTSPETQARIFEIVDEVDTVICDAAPNLSGNWALDHARSIDLATVALDVATKLLKKGGNFVVKVFQGDLYENYVKEVGKRFSYATTYKSQASRQQSAEIYVIGKGFLTTSLRKGDVVDVTIDAMGKTGDGIAHVDDFVVFVKGGSVGDKLKIKITDVKPSFAFADIVEKEK.

The S-adenosyl-L-methionine site is built by G50, W52, D69, D85, and D108. K148 serves as the catalytic Proton acceptor. The region spanning 195–253 (SLRKGDVVDVTIDAMGKTGDGIAHVDDFVVFVKGGSVGDKLKIKITDVKPSFAFADIVE) is the TRAM domain.

It belongs to the class I-like SAM-binding methyltransferase superfamily. RNA methyltransferase RlmE family.

It is found in the cytoplasm. The catalysed reaction is uridine(2552) in 23S rRNA + S-adenosyl-L-methionine = 2'-O-methyluridine(2552) in 23S rRNA + S-adenosyl-L-homocysteine + H(+). Specifically methylates the uridine in position 2552 of 23S rRNA at the 2'-O position of the ribose in the fully assembled 50S ribosomal subunit. The polypeptide is Ribosomal RNA large subunit methyltransferase E (Methanocella arvoryzae (strain DSM 22066 / NBRC 105507 / MRE50)).